The primary structure comprises 281 residues: Bifunctional protein FolD (281 aa).

NADP(+)-binding positions include 165–167 (GRG), threonine 192, and valine 233.

Belongs to the tetrahydrofolate dehydrogenase/cyclohydrolase family. In terms of assembly, homodimer.

The catalysed reaction is (6R)-5,10-methylene-5,6,7,8-tetrahydrofolate + NADP(+) = (6R)-5,10-methenyltetrahydrofolate + NADPH. The enzyme catalyses (6R)-5,10-methenyltetrahydrofolate + H2O = (6R)-10-formyltetrahydrofolate + H(+). Its pathway is one-carbon metabolism; tetrahydrofolate interconversion. In terms of biological role, catalyzes the oxidation of 5,10-methylenetetrahydrofolate to 5,10-methenyltetrahydrofolate and then the hydrolysis of 5,10-methenyltetrahydrofolate to 10-formyltetrahydrofolate. The polypeptide is Bifunctional protein FolD (Mycobacterium tuberculosis (strain ATCC 25177 / H37Ra)).